Reading from the N-terminus, the 201-residue chain is 3-isopropylmalate dehydratase small subunit (201 aa).

The protein belongs to the LeuD family. LeuD type 1 subfamily. In terms of assembly, heterodimer of LeuC and LeuD.

The enzyme catalyses (2R,3S)-3-isopropylmalate = (2S)-2-isopropylmalate. The protein operates within amino-acid biosynthesis; L-leucine biosynthesis; L-leucine from 3-methyl-2-oxobutanoate: step 2/4. Catalyzes the isomerization between 2-isopropylmalate and 3-isopropylmalate, via the formation of 2-isopropylmaleate. The protein is 3-isopropylmalate dehydratase small subunit of Shigella boydii serotype 18 (strain CDC 3083-94 / BS512).